The sequence spans 113 residues: C-C motif chemokine 15 (113 aa).

Residues 1–21 (MKVSVAALSCLMLVAVLGSQA) form the signal peptide. Disulfide bonds link cysteine 53–cysteine 77, cysteine 54–cysteine 93, and cysteine 64–cysteine 104.

The protein belongs to the intercrine beta (chemokine CC) family. In terms of assembly, monomer. Post-translationally, the N-terminal is proteolytically cleaved by proteases associated with inflammatory responses. The processed forms CCL15(22-92), CCL15(25-92) and CCL15(29-92) exhibit increase in CCR1-mediated signaling and chemotaxis assays in vitro. As to expression, most abundant in heart, skeletal muscle and adrenal gland. Lower levels in placenta, liver, pancreas and bone marrow. CCL15(22-92), CCL15(25-92) and CCL15(29-92) are found in high levels in synovial fluids from rheumatoid patients.

The protein localises to the secreted. Its function is as follows. Chemotactic factor that attracts T-cells and monocytes, but not neutrophils, eosinophils, or B-cells. Acts mainly via CC chemokine receptor CCR1. Also binds to CCR3. CCL15(22-92), CCL15(25-92) and CCL15(29-92) are more potent chemoattractants than the CCL15. The chain is C-C motif chemokine 15 (CCL15) from Homo sapiens (Human).